Reading from the N-terminus, the 316-residue chain is Serpentine receptor class delta-48 (316 aa).

7 helical membrane-spanning segments follow: residues F8–I28, F42–L62, L89–I109, V127–L147, F185–I205, T236–V256, and I269–V289.

The protein belongs to the nematode receptor-like protein srd family.

It is found in the membrane. The protein is Serpentine receptor class delta-48 (srd-48) of Caenorhabditis elegans.